The following is a 327-amino-acid chain: Phenylalanine--tRNA ligase alpha subunit (327 aa).

E252 contributes to the Mg(2+) binding site.

It belongs to the class-II aminoacyl-tRNA synthetase family. Phe-tRNA synthetase alpha subunit type 1 subfamily. Tetramer of two alpha and two beta subunits. Mg(2+) serves as cofactor.

It localises to the cytoplasm. It catalyses the reaction tRNA(Phe) + L-phenylalanine + ATP = L-phenylalanyl-tRNA(Phe) + AMP + diphosphate + H(+). The polypeptide is Phenylalanine--tRNA ligase alpha subunit (Shewanella sediminis (strain HAW-EB3)).